The following is a 190-amino-acid chain: MATETKLSQMEEFIRAFLEIDADSNEMIDKQELIKYCQKYRLDMKLIDPWIARFDTDKDNKISIEEFCRGFGLKVSEIRREKDELKKERDGKFPKLPPNIEIIAATMSKTKQYEICCQFKEYVDNTSRTGNDMREVANKMKSLLDNTYGRVWQVVLLTGSYWMNFSHEPFLSIQFKYNNYVCLAWRTPSQ.

2 consecutive EF-hand domains span residues 8 to 43 (SQME…YRLD) and 51 to 77 (IARF…KVSE). Aspartate 55, aspartate 57, aspartate 59, lysine 61, and glutamate 66 together coordinate Ca(2+).

As to expression, adult and schistosomula tegument.

The chain is Tegument antigen from Schistosoma mansoni (Blood fluke).